The chain runs to 92 residues: Conotoxin Mr15.3 (92 aa).

A signal peptide spans 1 to 20; it reads MSTLKMMLLILLLLLPMATF. Positions 21–53 are excised as a propeptide; that stretch reads DSDGQAIPGGGIPSAVNSRVRGDEKSGRSLEKR.

This sequence belongs to the conotoxin N superfamily. Post-translationally, contains 4 disulfide bonds. In terms of tissue distribution, expressed by the venom duct.

Its subcellular location is the secreted. In Conus marmoreus (Marble cone), this protein is Conotoxin Mr15.3.